A 458-amino-acid polypeptide reads, in one-letter code: Ig mu chain C region secreted form (458 aa).

Residues 1–106 form a CH1 region; that stretch reads VSLSSPTLYP…SNRDLRVSFP (106 aa). Cysteines 28 and 90 form a disulfide. N-linked (GlcNAc...) asparagine glycosylation is found at Asn46 and Asn114. The segment at 107–222 is CH2; it reads VDSELPPNVS…VSMSSECSTT (116 aa). Cysteines 137 and 200 form a disulfide. Asn212, Asn261, Asn277, and Asn284 each carry an N-linked (GlcNAc...) asparagine glycan. Residues 223-327 form a CH3 region; that stretch reads PSPGIQVFPI…PLKHTISKSR (105 aa). 2 disulfides stabilise this stretch: Cys249–Cys308 and Cys356–Cys418. Residues 328-458 form a CH4 region; the sequence is EVAKHPPAVY…IMSDTASTCY (131 aa). The N-linked (GlcNAc...) asparagine glycan is linked to Asn445.

Its subcellular location is the secreted. In Oryctolagus cuniculus (Rabbit), this protein is Ig mu chain C region secreted form.